Reading from the N-terminus, the 844-residue chain is Probable serine/threonine-protein kinase DDB_G0267566 (844 aa).

ANK repeat units follow at residues 335 to 367 and 371 to 400; these read KGDT…NANI and KHKV…KPFL. Positions 508–773 constitute a Protein kinase domain; that stretch reads SELGKLIGKG…FEVFQKLKKV (266 aa). ATP-binding positions include 514–522 and lysine 539; that span reads IGKGANGKV. Aspartate 634 functions as the Proton acceptor in the catalytic mechanism.

The protein belongs to the protein kinase superfamily. Ser/Thr protein kinase family.

It carries out the reaction L-seryl-[protein] + ATP = O-phospho-L-seryl-[protein] + ADP + H(+). It catalyses the reaction L-threonyl-[protein] + ATP = O-phospho-L-threonyl-[protein] + ADP + H(+). The chain is Probable serine/threonine-protein kinase DDB_G0267566 from Dictyostelium discoideum (Social amoeba).